Consider the following 1344-residue polypeptide: MDCIEVRGFYSSTEEQNPEQQADISENISSLFSLKEQQKMSEYSGLASNHSQMIAEDSEIQPKPEHSPEVLQEDIEMSSGSSGNDFSGNETNENYSSGHDSHGHESDENGKDSAMLMESSDCHKSSSSNAFSLMIANSEHNQSSSGCSSEQSTKAKTQKELLKTLQELKAHLPAEKRIKGKSSVLTTLKYALKSIKQVKANEEYYQLLMINESQPSGLNVSSYTVEEVETITSEYIMKNADMFAVAVSLITGKIVYISDQAAAILRCKRSYFKNAKFVELLAPQDVSVFYTSTTPYRLPSWNICSRAESSTQDCMEEKSFFCRISAGKERENEICYHPFRMTPYLIKVQDPEVAEDQLCCVLLAEKVHSGYEAPRIPPDKRIFTTTHTPTCLFQDVDERAVPLLGYLPQDLIGTPVLVHLHPNDRPLMLAIHKKILQYGGQPFDYSPIRFCTRNGDYITMDTSWSSFINPWSRKVSFIIGRHKVRTGPLNEDVFAAPNYTEDRILHPSVQEITEQIYRLLLQPVHNSGSSGYGSLGSNGSHEHLMSVASSSDSTGNNNDDTQKDKTISQDARKVKTKGQHIFTENKGKLEYKREPSAEKQNGPGGQVKDVIGKDTTATAAPKNVATEELAWKEQPVYSYQQISCLDSVIRYLESCNVPGTAKRKCEPSSSVNSSVHEQKASVNAIQPLGDSTVLKSSGKSSGPPVVGAHLTSLALPGKPESVVSLTSQCSYSSTIVHVGDKKPQPELEMIEDGPSGAEVLDTQLPAPPPSSTHVNQEKESFKKLGLTKEVLAVHTQKEEQSFLNKFKEIKRFNIFQSHCNYYLQDKPKGRPGERGGRGQRNGTSGMDQPWKKSGKNRKSKRIKPQESSDSTTSGTKFPHRFPLQGLNTTAWSPSDTSQASYSAMSFPTVMPAYPLPVFPAAAGTVPPAPETSVSGFNQLPDSGNTCSMQPSQFSAPLMTPVVALVLPNYVYPEMNNSLPQTLYHSQANFPTHPAFSSQTVFPAQPPFTTPSPFPQQAFFPMQPFHYNPPAEIEKVPVTETRNEPSRSCTPQSVGPQDQASPPLFQSRCSSPLNLLQLEENTKTVESGAPAGLHGALNEEGTIGKIMTTDAGSGKGSLPAESPMDAQNSDALSMSSVLLDILLQEDACSGTGSASSGSGVSAAAESLGSGSNGCDMSGSRTGSSETSHTSKYFGSIDSSENHHKTKMKAEIEESEHFIKYVLQDPIWLLMANTDDTVMMTYQLPSRDLETVLKEDKLKLKQMQKLQPKFTEDQKRELIEVHPWIQQGGLPKTVANSECIFCEDNIQSNFYTSYDEEIHEMDLNEMIEDSGENNLVPLSQVNEEQT.

Disordered stretches follow at residues 1–21 (MDCIEVRGFYSSTEEQNPEQQ) and 42–112 (EYSG…NGKD). Residues 10–21 (YSSTEEQNPEQQ) show a composition bias toward polar residues. Residues 78–89 (SSGSSGNDFSGN) are compositionally biased toward low complexity. Over residues 99–111 (HDSHGHESDENGK) the composition is skewed to basic and acidic residues. Residues 161–170 (LLKTLQELKA) carry the Nuclear export signal 1 motif. The 68-residue stretch at 231–298 (ITSEYIMKNA…FYTSTTPYRL (68 aa)) folds into the PAS 1 domain. An LXXLL motif is present at residues 358–362 (LCCVL). Residues 371 to 437 (YEAPRIPPDK…MLAIHKKILQ (67 aa)) form the PAS 2 domain. A PAC domain is found at 445 to 488 (YSPIRFCTRNGDYITMDTSWSSFINPWSRKVSFIIGRHKVRTGP). Positions 512-521 (ITEQIYRLLL) match the Nuclear export signal 2 motif. Disordered stretches follow at residues 531–609 (GYGS…QVKD), 661–686 (AKRKCEPSSSVNSSVHEQKASVNAIQ), 823–894 (LQDK…WSPS), 1038–1065 (TETRNEPSRSCTPQSVGPQDQASPPLFQ), and 1107–1126 (TTDAGSGKGSLPAESPMDAQ). Residues 549-559 (SSSDSTGNNND) are compositionally biased toward low complexity. Basic and acidic residues-rich tracts occupy residues 560–573 (DTQKDKTISQDARK) and 583–597 (TENKGKLEYKREPSA). Over residues 667–684 (PSSSVNSSVHEQKASVNA) the composition is skewed to polar residues. The segment covering 825–836 (DKPKGRPGERGG) has biased composition (basic and acidic residues). Residues 851 to 865 (KKSGKNRKSKRIKPQ) carry the Nuclear localization signal motif. The span at 852–862 (KSGKNRKSKRI) shows a compositional bias: basic residues. Polar residues-rich tracts occupy residues 865-875 (QESSDSTTSGT), 885-894 (GLNTTAWSPS), and 1045-1059 (SRSCTPQSVGPQDQA). The short motif at 1138 to 1142 (LDILL) is the LXXLL element. The span at 1149–1172 (GTGSASSGSGVSAAAESLGSGSNG) shows a compositional bias: low complexity. A disordered region spans residues 1149–1197 (GTGSASSGSGVSAAAESLGSGSNGCDMSGSRTGSSETSHTSKYFGSIDS). The segment covering 1177–1197 (GSRTGSSETSHTSKYFGSIDS) has biased composition (polar residues). The interval 1244–1344 (SRDLETVLKE…PLSQVNEEQT (101 aa)) is CRY binding domain.

Component of the circadian clock oscillator which includes the CRY proteins, CLOCK or NPAS2, BMAL1 or BMAL2, CSNK1E, and the PER proteins. Interacts directly with PER3, and through a C-terminal domain, with CRY1 and CRY2.

It is found in the nucleus. It localises to the cytoplasm. Functionally, transcriptional repressor which forms a core component of the circadian clock. The circadian clock, an internal time-keeping system, regulates various physiological processes through the generation of approximately 24 hour circadian rhythms in gene expression, which are translated into rhythms in metabolism and behavior. It is derived from the Latin roots 'circa' (about) and 'diem' (day) and acts as an important regulator of a wide array of physiological functions including metabolism, sleep, body temperature, blood pressure, endocrine, immune, cardiovascular, and renal function. Consists of two major components: the central clock, residing in the suprachiasmatic nucleus (SCN) of the brain, and the peripheral clocks that are present in nearly every tissue and organ system. Both the central and peripheral clocks can be reset by environmental cues, also known as Zeitgebers (German for 'timegivers'). The predominant Zeitgeber for the central clock is light, which is sensed by retina and signals directly to the SCN. The central clock entrains the peripheral clocks through neuronal and hormonal signals, body temperature and feeding-related cues, aligning all clocks with the external light/dark cycle. Circadian rhythms allow an organism to achieve temporal homeostasis with its environment at the molecular level by regulating gene expression to create a peak of protein expression once every 24 hours to control when a particular physiological process is most active with respect to the solar day. Transcription and translation of core clock components (CLOCK, NPAS2, BMAL1, BMAL2, PER1, PER2, PER3, CRY1 and CRY2) plays a critical role in rhythm generation, whereas delays imposed by post-translational modifications (PTMs) are important for determining the period (tau) of the rhythms (tau refers to the period of a rhythm and is the length, in time, of one complete cycle). A diurnal rhythm is synchronized with the day/night cycle, while the ultradian and infradian rhythms have a period shorter and longer than 24 hours, respectively. Disruptions in the circadian rhythms contribute to the pathology of cardiovascular diseases, cancer, metabolic syndrome and aging. A transcription/translation feedback loop (TTFL) forms the core of the molecular circadian clock mechanism. Transcription factors, CLOCK or NPAS2 and BMAL1 or BMAL2, form the positive limb of the feedback loop, act in the form of a heterodimer and activate the transcription of core clock genes and clock-controlled genes (involved in key metabolic processes), harboring E-box elements (5'-CACGTG-3') within their promoters. The core clock genes: PER1/2/3 and CRY1/2 which are transcriptional repressors form the negative limb of the feedback loop and interact with the CLOCK|NPAS2-BMAL1|BMAL2 heterodimer inhibiting its activity and thereby negatively regulating their own expression. This heterodimer also activates nuclear receptors NR1D1/2 and RORA/B/G, which form a second feedback loop and which activate and repress BMAL1 transcription, respectively. PER1 and PER2 proteins transport CRY1 and CRY2 into the nucleus with appropriate circadian timing, but also contribute directly to repression of clock-controlled target genes through interaction with several classes of RNA-binding proteins, helicases and others transcriptional repressors. PER appears to regulate circadian control of transcription by at least three different modes. First, interacts directly with the CLOCK-BMAL1 at the tail end of the nascent transcript peak to recruit complexes containing the SIN3-HDAC that remodel chromatin to repress transcription. Second, brings H3K9 methyltransferases such as SUV39H1 and SUV39H2 to the E-box elements of the circadian target genes, like PER2 itself or PER1. The recruitment of each repressive modifier to the DNA seems to be very precisely temporally orchestrated by the large PER complex, the deacetylases acting before than the methyltransferases. Additionally, large PER complexes are also recruited to the target genes 3' termination site through interactions with RNA-binding proteins and helicases that may play a role in transcription termination to regulate transcription independently of CLOCK-BMAL1 interactions. This chain is Period circadian protein homolog 2 (PER2), found in Gallus gallus (Chicken).